Here is a 285-residue protein sequence, read N- to C-terminus: Pseudouridine-5'-phosphate glycosidase (285 aa).

Residue Glu17 is the Proton donor of the active site. Residues Lys77 and Val97 each contribute to the substrate site. Asp126 is a binding site for Mn(2+). Substrate is bound at residue 128–130 (SQD). Lys147 acts as the Nucleophile in catalysis.

Belongs to the pseudouridine-5'-phosphate glycosidase family. As to quaternary structure, homotrimer. The cofactor is Mn(2+).

The enzyme catalyses D-ribose 5-phosphate + uracil = psi-UMP + H2O. Functionally, catalyzes the reversible cleavage of pseudouridine 5'-phosphate (PsiMP) to ribose 5-phosphate and uracil. Functions biologically in the cleavage direction, as part of a pseudouridine degradation pathway. In Thermotoga maritima (strain ATCC 43589 / DSM 3109 / JCM 10099 / NBRC 100826 / MSB8), this protein is Pseudouridine-5'-phosphate glycosidase.